A 348-amino-acid chain; its full sequence is Large ribosomal subunit protein uL3m (348 aa).

The N-terminal 40 residues, 1-40, are a transit peptide targeting the mitochondrion; that stretch reads MPGWRLLTQVGAQVLGRLGDGLGAALGPGNRTHIWLFVRG.

The protein belongs to the universal ribosomal protein uL3 family. As to quaternary structure, component of the mitochondrial large ribosomal subunit (mt-LSU). Mature mammalian 55S mitochondrial ribosomes consist of a small (28S) and a large (39S) subunit. The 28S small subunit contains a 12S ribosomal RNA (12S mt-rRNA) and 30 different proteins. The 39S large subunit contains a 16S rRNA (16S mt-rRNA), a copy of mitochondrial valine transfer RNA (mt-tRNA(Val)), which plays an integral structural role, and 52 different proteins.

The protein resides in the mitochondrion. The protein is Large ribosomal subunit protein uL3m (MRPL3) of Homo sapiens (Human).